Here is an 880-residue protein sequence, read N- to C-terminus: Tyrosine-protein kinase receptor TYRO3 (880 aa).

A signal peptide spans 1 to 30; that stretch reads MALRRSMGRPGLRPLLLAGLASLLLPGSAA. 2 consecutive Ig-like C2-type domains span residues 31-118 and 129-210; these read AGLK…TKIS and PFFT…AIIR. At 31-419 the chain is on the extracellular side; that stretch reads AGLKLMGAPV…QGPPHSRTSW (389 aa). Asn-53, Asn-75, Asn-181, Asn-220, Asn-230, Asn-283, Asn-356, and Asn-370 each carry an N-linked (GlcNAc...) asparagine glycan. Cystine bridges form between Cys-54–Cys-107 and Cys-150–Cys-193. 2 consecutive Fibronectin type-III domains span residues 217 to 310 and 315 to 406; these read APFN…TKGL and APQN…SHDH. A helical membrane pass occupies residues 420 to 440; that stretch reads VPVVLGVLTALITAAALALIL. Topologically, residues 441–880 are cytoplasmic; that stretch reads LRKRRKETRF…QQGLLPHSSC (440 aa). At Ser-456 the chain carries Phosphoserine. The 278-residue stretch at 508–785 folds into the Protein kinase domain; sequence FTLGRMLGKG…LENILGHLSV (278 aa). ATP is bound by residues 514-522 and Lys-540; that span reads LGKGEFGSV. The active-site Proton acceptor is the Asp-645. Phosphotyrosine; by autocatalysis is present on residues Tyr-671, Tyr-675, Tyr-676, and Tyr-794. 2 disordered regions span residues 804-827 and 842-864; these read AENGSPELPCGEQSSSEAGDGSGM and SPGGLAESPGQLEQQPESPLNEN. Ser-808 and Ser-859 each carry phosphoserine. Positions 852–864 are enriched in polar residues; sequence QLEQQPESPLNEN.

Belongs to the protein kinase superfamily. Tyr protein kinase family. AXL/UFO subfamily. As to quaternary structure, monomer and homodimer. Interacts (via N-terminus) with extracellular ligands TULP1 and GAS6. Interacts with PIK3R1; this interaction increases PI3-kinase activity. Autophosphorylated. In terms of tissue distribution, abundant in the brain and lower levels in other tissues.

Its subcellular location is the cell membrane. The enzyme catalyses L-tyrosyl-[protein] + ATP = O-phospho-L-tyrosyl-[protein] + ADP + H(+). In terms of biological role, receptor tyrosine kinase that transduces signals from the extracellular matrix into the cytoplasm by binding to several ligands including TULP1 or GAS6. Regulates many physiological processes including cell survival, migration and differentiation. Ligand binding at the cell surface induces dimerization and autophosphorylation of TYRO3 on its intracellular domain that provides docking sites for downstream signaling molecules. Following activation by ligand, interacts with PIK3R1 and thereby enhances PI3-kinase activity. Activates the AKT survival pathway, including nuclear translocation of NF-kappa-B and up-regulation of transcription of NF-kappa-B-regulated genes. TYRO3 signaling plays a role in various processes such as neuron protection from excitotoxic injury, platelet aggregation and cytoskeleton reorganization. Also plays an important role in inhibition of Toll-like receptors (TLRs)-mediated innate immune response by activating STAT1, which selectively induces production of suppressors of cytokine signaling SOCS1 and SOCS3. The chain is Tyrosine-protein kinase receptor TYRO3 (Tyro3) from Rattus norvegicus (Rat).